The following is a 463-amino-acid chain: Glycine--tRNA ligase (463 aa).

Substrate contacts are provided by arginine 98 and glutamate 174. ATP is bound by residues 206–208, 216–221, 290–291, and 334–337; these read RNE, FRTREF, EL, and GADR. 221–225 provides a ligand contact to substrate; that stretch reads FEQME. 330–334 is a substrate binding site; it reads EPSLG.

This sequence belongs to the class-II aminoacyl-tRNA synthetase family. As to quaternary structure, homodimer.

It is found in the cytoplasm. The catalysed reaction is tRNA(Gly) + glycine + ATP = glycyl-tRNA(Gly) + AMP + diphosphate. Catalyzes the attachment of glycine to tRNA(Gly). The sequence is that of Glycine--tRNA ligase from Staphylococcus aureus (strain bovine RF122 / ET3-1).